A 580-amino-acid chain; its full sequence is Phosphomethylpyrimidine synthase (580 aa).

A disordered region spans residues 1–58 (MTPTQNEIHPKHSYSPIRKHGLEVPETEIALDDSPSGPNEPFRIYRTRGPETDPTLGL). Substrate is bound by residues N180, M209, Y238, H274, 294–296 (SRG), 335–338 (DGLR), and E374. H378 contacts Zn(2+). A substrate-binding site is contributed by Y401. H442 serves as a coordination point for Zn(2+). 3 residues coordinate [4Fe-4S] cluster: C522, C525, and C530. The disordered stretch occupies residues 554–580 (VGASDSTEGMKEKSREFVAGGGEVYRE).

The protein belongs to the ThiC family. [4Fe-4S] cluster is required as a cofactor.

It catalyses the reaction 5-amino-1-(5-phospho-beta-D-ribosyl)imidazole + S-adenosyl-L-methionine = 4-amino-2-methyl-5-(phosphooxymethyl)pyrimidine + CO + 5'-deoxyadenosine + formate + L-methionine + 3 H(+). It functions in the pathway cofactor biosynthesis; thiamine diphosphate biosynthesis. Functionally, catalyzes the synthesis of the hydroxymethylpyrimidine phosphate (HMP-P) moiety of thiamine from aminoimidazole ribotide (AIR) in a radical S-adenosyl-L-methionine (SAM)-dependent reaction. This is Phosphomethylpyrimidine synthase from Corynebacterium efficiens (strain DSM 44549 / YS-314 / AJ 12310 / JCM 11189 / NBRC 100395).